Consider the following 551-residue polypeptide: MPSARLQQQFIRLWQCCEGKSQDTTLNELAALLSCSRRHMRTLLNTMQDRGWLTWEAEVGRGKRSRLTFLYTGLALQQQRAEDLLEQDRIDQLVQLVGDKATVRQMLVSHLGRSFRQGRHILRVLYYRPLRNLLPGSALRRSETHIARQIFSSLTRINEENGELEADIAHHWQQISPLHWRFFLRPGVHFHHGRELEMDDVIASLKRINTLPLYSHITDIVSPTPWTLDIHLTQPDRWLPLLLGQVPAMILPCEWETLSNFASHPIGTGPYAVIRNSTNQLKIQAFDDFFGYRALIDEVNVWVLPEIADEPAGGLMLKGPQGEKKEIESRLEEGCYYLLFDSRTHRGANQQVRDWVSYVLSPTNLVYFAEEQYQQLWFPAYGLLPRWHHARTIKSEKPAGLESLTLTFYQDHSEHRVIAGIMQQILASHQVTLEIKEISYDQWHEGEIESDIWLNSANFTLPLDFSLFAHLCEVPLLQHCIPIDWQADAARWRNGEMNLANWCQQLVASKAMVPLIHHWLIIQGQRSMRGLRMNTLGWFDFKSAWFAPPDP.

The HTH marR-type domain maps to 1–116; that stretch reads MPSARLQQQF…LVSHLGRSFR (116 aa). A DNA-binding region (H-T-H motif) is located at residues 26-49; sequence LNELAALLSCSRRHMRTLLNTMQD. The interval 163–492 is solute-binding; sequence ELEADIAHHW…IDWQADAARW (330 aa).

Activates the small RNA gene sgrS under glucose-phosphate stress conditions as well as yfdZ. Represses its own transcription under both stress and non-stress conditions. Might act as a sensor of the intracellular accumulation of phosphoglucose by binding these molecules in its C-terminal solute-binding domain. The protein is HTH-type transcriptional regulator SgrR of Shigella flexneri serotype 5b (strain 8401).